A 104-amino-acid polypeptide reads, in one-letter code: Nucleoid-associated protein Dtur_0258 (104 aa).

Residues 84–104 (EKSAEKMGSLTDGLPLPPGLF) form a disordered region.

The protein belongs to the YbaB/EbfC family. In terms of assembly, homodimer.

The protein resides in the cytoplasm. Its subcellular location is the nucleoid. In terms of biological role, binds to DNA and alters its conformation. May be involved in regulation of gene expression, nucleoid organization and DNA protection. The polypeptide is Nucleoid-associated protein Dtur_0258 (Dictyoglomus turgidum (strain DSM 6724 / Z-1310)).